Here is a 142-residue protein sequence, read N- to C-terminus: Midkine (142 aa).

The first 21 residues, 1–21, serve as a signal peptide directing secretion; the sequence is MELRAFCVILLITFLAVSSQA. 5 disulfides stabilise this stretch: C36–C60, C44–C69, C51–C73, C83–C115, and C93–C125.

It belongs to the pleiotrophin family.

The protein localises to the secreted. In terms of biological role, secreted protein that functions as a cytokine and growth factor and mediates its signal through cell-surface proteoglycan and non-proteoglycan receptors. Binds cell-surface proteoglycan receptors via their chondroitin sulfate (CS) groups. Thereby regulates many processes like inflammatory response, cell proliferation, cell adhesion, cell growth, cell survival, tissue regeneration, cell differentiation and cell migration. Inhibits mesoderm formation and promotes neural formation during development. Plays a role in development of the neuromuscular junction (NMJ). Has antibacterial activity against both Gram-positive and Gram-negative bacteria. This Xenopus tropicalis (Western clawed frog) protein is Midkine.